We begin with the raw amino-acid sequence, 315 residues long: Prephenate dehydratase (315 aa).

The 187-residue stretch at 3–189 (RIAYLGPEGT…ARTRFVLVGP (187 aa)) folds into the Prephenate dehydratase domain. In terms of domain architecture, ACT spans 203–280 (SVVLRIDNAP…ADVRYLGSWP (78 aa)).

As to quaternary structure, homodimer.

The catalysed reaction is prephenate + H(+) = 3-phenylpyruvate + CO2 + H2O. Its pathway is amino-acid biosynthesis; L-phenylalanine biosynthesis; phenylpyruvate from prephenate: step 1/1. This Mycobacterium avium (strain 104) protein is Prephenate dehydratase (pheA).